A 317-amino-acid chain; its full sequence is uncharacterized protein (317 aa).

The protein belongs to the asfivirus F317L family.

The protein resides in the virion. This is an uncharacterized protein from African swine fever virus (strain Badajoz 1971 Vero-adapted) (Ba71V).